The following is a 440-amino-acid chain: Glucose-1-phosphate adenylyltransferase (440 aa).

Residues Tyr125, Gly190, 205 to 206, and Ser223 contribute to the alpha-D-glucose 1-phosphate site; that span reads EK.

This sequence belongs to the bacterial/plant glucose-1-phosphate adenylyltransferase family. In terms of assembly, homotetramer.

The catalysed reaction is alpha-D-glucose 1-phosphate + ATP + H(+) = ADP-alpha-D-glucose + diphosphate. It participates in glycan biosynthesis; glycogen biosynthesis. In terms of biological role, involved in the biosynthesis of ADP-glucose, a building block required for the elongation reactions to produce glycogen. Catalyzes the reaction between ATP and alpha-D-glucose 1-phosphate (G1P) to produce pyrophosphate and ADP-Glc. In Dechloromonas aromatica (strain RCB), this protein is Glucose-1-phosphate adenylyltransferase.